A 244-amino-acid chain; its full sequence is Probable metallo-hydrolase YhfI (244 aa).

Residues His-59, His-61, Asp-63, His-64, His-134, Asp-155, and His-211 each coordinate Zn(2+).

It belongs to the metallo-beta-lactamase superfamily. The cofactor is Zn(2+).

This chain is Probable metallo-hydrolase YhfI (yhfI), found in Bacillus subtilis (strain 168).